Consider the following 1080-residue polypeptide: DNA-directed RNA polymerase subunit beta (1080 aa).

This sequence belongs to the RNA polymerase beta chain family. In plastids the minimal PEP RNA polymerase catalytic core is composed of four subunits: alpha, beta, beta', and beta''. When a (nuclear-encoded) sigma factor is associated with the core the holoenzyme is formed, which can initiate transcription.

The protein resides in the plastid. The protein localises to the chloroplast. The catalysed reaction is RNA(n) + a ribonucleoside 5'-triphosphate = RNA(n+1) + diphosphate. Its function is as follows. DNA-dependent RNA polymerase catalyzes the transcription of DNA into RNA using the four ribonucleoside triphosphates as substrates. The chain is DNA-directed RNA polymerase subunit beta from Mesostigma viride (Green alga).